The primary structure comprises 238 residues: NAD(P)H-hydrate epimerase (238 aa).

The 216-residue stretch at 10–225 folds into the YjeF N-terminal domain; it reads AIKVDQILFN…ALQRQYELNL (216 aa). 68 to 72 contacts (6S)-NADPHX; it reads NNGGD. K(+) is bound by residues asparagine 69 and aspartate 133. Residues 137–143 and aspartate 166 each bind (6S)-NADPHX; that span reads GFSFKPP. Position 169 (serine 169) interacts with K(+).

The protein belongs to the NnrE/AIBP family. The cofactor is K(+).

The enzyme catalyses (6R)-NADHX = (6S)-NADHX. It carries out the reaction (6R)-NADPHX = (6S)-NADPHX. In terms of biological role, catalyzes the epimerization of the S- and R-forms of NAD(P)HX, a damaged form of NAD(P)H that is a result of enzymatic or heat-dependent hydration. This is a prerequisite for the S-specific NAD(P)H-hydrate dehydratase to allow the repair of both epimers of NAD(P)HX. The sequence is that of NAD(P)H-hydrate epimerase from Drosophila willistoni (Fruit fly).